The sequence spans 185 residues: Large ribosomal subunit protein uL5 (185 aa).

Belongs to the universal ribosomal protein uL5 family. As to quaternary structure, part of the 50S ribosomal subunit; part of the 5S rRNA/L5/L18/L25 subcomplex. Contacts the 5S rRNA and the P site tRNA. Forms a bridge to the 30S subunit in the 70S ribosome.

This is one of the proteins that bind and probably mediate the attachment of the 5S RNA into the large ribosomal subunit, where it forms part of the central protuberance. In the 70S ribosome it contacts protein S13 of the 30S subunit (bridge B1b), connecting the 2 subunits; this bridge is implicated in subunit movement. Contacts the P site tRNA; the 5S rRNA and some of its associated proteins might help stabilize positioning of ribosome-bound tRNAs. The protein is Large ribosomal subunit protein uL5 of Bacteroides fragilis (strain ATCC 25285 / DSM 2151 / CCUG 4856 / JCM 11019 / LMG 10263 / NCTC 9343 / Onslow / VPI 2553 / EN-2).